We begin with the raw amino-acid sequence, 184 residues long: MAAARQTPRKLKIGAGSVVCQEAEIKGEVIIGSKTVVHPKARIIAEAGPIIIGDNNLIEEQVTIINPLQVEENEEVPPERIVMHIGCNNVFEVGSLCEAVKIGDNNILEAKSRVGRQTVLSHGCVIGARCEVTSQETIPENTVIYGQSCNRRVQAERPVPQSLQLDFLTKILPNYHHMKKSSRS.

This sequence belongs to the dynactin subunits 5/6 family. Dynactin subunit 6 subfamily. Subunit of dynactin, a multiprotein complex part of a tripartite complex with dynein and a adapter, such as BICDL1, BICD2 or HOOK3. The dynactin complex is built around ACTR1A/ACTB filament and consists of an actin-related filament composed of a shoulder domain, a pointed end and a barbed end.

Its subcellular location is the cytoplasm. It localises to the cytoskeleton. Functionally, part of the dynactin complex that activates the molecular motor dynein for ultra-processive transport along microtubules. The polypeptide is Dynactin subunit 6 (dctn6) (Nematostella vectensis (Starlet sea anemone)).